The sequence spans 396 residues: Transcription factor E2FC (396 aa).

Residues 34–48 (PRYSSLTPSSTNRPF) show a composition bias toward polar residues. The interval 34-57 (PRYSSLTPSSTNRPFSVSQSLPNS) is disordered. A DNA-binding region spans residues 155–220 (RYDSSLGLLT…TTKNHIRWKG (66 aa)). Residues 226–268 (QKDLGDQISRLKSEVESMQSEESRLDDLIRERQEALRSLEEDD) adopt a coiled-coil conformation. Residues 236–264 (LKSEVESMQSEESRLDDLIRERQEALRSL) form a leucine-zipper region. Positions 376 to 391 (DYWFESDAEVSLTDLW) are retinoblastoma protein binding.

The protein belongs to the E2F/DP family. In terms of assembly, heterodimer with DP proteins. Interacts preferentially with DPB, but also with DPA. No interaction with DPB when phosphorylated. Interacts with SKP2A, CDKA-1 and maize retinoblastoma-related protein RBR1. Component of a DREAM-like complex which modulates a variety of developmentally regulated genes and of the mitotic genes in proliferating and differentiated cells. Interacts with MYB3R3 at later stages of leaves development. Phosphorylated by cyclin-dependent kinase. Phosphorylation is necessary to target E2FC for proteolysis. As to expression, expressed in meristematic areas, vascular tissues, apical part of the roots, cotyledons, upper region of the hypocotyls, trichomes, young flower buds and pollen grains.

It is found in the cytoplasm. In terms of biological role, involved in transcriptional repression. May act by repressing E2F-regulated genes in mature differentiated cells, but is not an antagonist of E2FA. Restricts cell division and is involved in the coordination between cell proliferation and endoreduplication during development. May play a role during the transition from skotomorphogenesis to photomorphogenesis. Regulated by phosphorylation-dependent proteolysis via the protein-ubiquitin ligase SCF(SKP2A) complex. The polypeptide is Transcription factor E2FC (E2FC) (Arabidopsis thaliana (Mouse-ear cress)).